Here is a 336-residue protein sequence, read N- to C-terminus: Glutamyl endopeptidase (336 aa).

Residues 1–29 (MKGKFLKVSSLFVATLTTATLVSSPAANA) form the signal peptide. Residues 30 to 68 (LSSKAMDNHPQQTQSSKQQTPKIQKGGNLKPLEQREHAN) constitute a propeptide that is removed on maturation. A disordered region spans residues 34-61 (AMDNHPQQTQSSKQQTPKIQKGGNLKPL). Residues 39 to 51 (PQQTQSSKQQTPK) show a composition bias toward low complexity. Catalysis depends on charge relay system residues His119, Asp161, and Ser237. The disordered stretch occupies residues 283–336 (FANDDQPNNPDNPDNPNNPDNPNNPDEPNNPDNPNNPDNPDNGDTNNSDNPDAA). A compositionally biased stretch (low complexity) spans 286-336 (DDQPNNPDNPDNPNNPDNPNNPDEPNNPDNPNNPDNPDNGDTNNSDNPDAA). 11 consecutive repeat copies span residues 289–291 (PNN), 292–294 (PDN), 295–297 (PDN), 298–300 (PNN), 301–303 (PDN), 304–306 (PNN), 310–312 (PNN), 313–315 (PDN), 316–318 (PNN), 319–321 (PDN), and 322–324 (PDN). Positions 289-324 (PNNPDNPDNPNNPDNPNNPDEPNNPDNPNNPDNPDN) are 11 X 3 AA repeats of P-[DN]-N.

It belongs to the peptidase S1B family. Post-translationally, proteolytically cleaved by aureolysin (aur). This cleavage leads to the activation of SspA.

It is found in the secreted. It carries out the reaction Preferential cleavage: Glu-|-Xaa, Asp-|-Xaa.. In terms of biological role, preferentially cleaves peptide bonds on the carboxyl-terminal side of aspartate and glutamate. Along with other extracellular proteases it is involved in colonization and infection of human tissues. Required for proteolytic maturation of thiol protease SspB and inactivation of SspC, an inhibitor of SspB. It is the most important protease for degradation of fibronectin-binding protein (FnBP) and surface protein A, which are involved in adherence to host cells. May also protect bacteria against host defense mechanism by cleaving the immunoglobulin classes IgG, IgA and IgM. May be involved in the stability of secreted lipases. The polypeptide is Glutamyl endopeptidase (sspA) (Staphylococcus aureus (strain COL)).